The primary structure comprises 53 residues: UPF0391 membrane protein Bcep18194_C7021 (53 aa).

A run of 2 helical transmembrane segments spans residues 5 to 25 and 30 to 50; these read AVIF…GIAA and IAKI…LLGV.

This sequence belongs to the UPF0391 family.

Its subcellular location is the cell membrane. The chain is UPF0391 membrane protein Bcep18194_C7021 from Burkholderia lata (strain ATCC 17760 / DSM 23089 / LMG 22485 / NCIMB 9086 / R18194 / 383).